Here is a 495-residue protein sequence, read N- to C-terminus: Probable cytochrome P450 508C1 (495 aa).

Residues 3–21 form a helical membrane-spanning segment; it reads LLNSLLLLFLIYLIHSFYI. Residue cysteine 442 coordinates heme.

It belongs to the cytochrome P450 family. Heme is required as a cofactor.

Its subcellular location is the membrane. The protein is Probable cytochrome P450 508C1 (cyp508C1) of Dictyostelium discoideum (Social amoeba).